The following is a 960-amino-acid chain: Importin alpha re-exporter (960 aa).

HEAT repeat units follow at residues 1 to 33 (MSDL…LETQ), 34 to 73 (DGFG…VDEN), 74 to 120 (GNHL…FPDR), 121 to 157 (WPTL…WRPL), 158 to 220 (FRSD…NCQD), 221 to 278 (IPEF…TRYE), 279 to 323 (DVFG…TRIP), 324 to 392 (KYFE…KEKN), 393 to 445 (EVLV…GVSS), 446 to 489 (TNNL…RNQL), 490 to 528 (TKAQ…TIRE), 529 to 586 (SNTS…TSED), 587 to 630 (SIQP…LNYT), 631 to 674 (QRQN…QSAT), 675 to 716 (IPES…SSIF), 717 to 751 (PDLV…LLID), 752 to 794 (MNRL…NKLG), and 795 to 826 (SDFL…PTIG). Residues 23–96 (SERNLRQLET…KKEIVPLMIS (74 aa)) form the Importin N-terminal domain. The Nuclear localization signal motif lies at 366 to 381 (RRDLEGSDTDTRRRAC). The HEAT 19; with insert repeat unit spans residues 827 to 928 (NLLDRKIALI…RLYVAEALNK (102 aa)). One copy of the HEAT 20 repeat lies at 929–960 (YNAISGNTFLNTILPQLTQENQVKLNQLLVGN).

This sequence belongs to the XPO2/CSE1 family. Binds with high affinity to SRP1 only in the presence of RanGTP. The complex is dissociated by the RanGTP-binding protein YRB1.

The protein localises to the cytoplasm. It is found in the nucleus. Functionally, export receptor for importin alpha (SRP1). Mediates importin-alpha re-export from the nucleus to the cytoplasm after import substrates have been released into the nucleoplasm. In Saccharomyces cerevisiae (strain ATCC 204508 / S288c) (Baker's yeast), this protein is Importin alpha re-exporter (CSE1).